Here is a 545-residue protein sequence, read N- to C-terminus: Chaperonin GroEL (545 aa).

ATP-binding positions include 29–32 (TMGP), Lys50, 86–90 (DGTTT), Gly414, 480–482 (NAA), and Asp496.

It belongs to the chaperonin (HSP60) family. Forms a cylinder of 14 subunits composed of two heptameric rings stacked back-to-back. Interacts with the co-chaperonin GroES.

The protein localises to the cytoplasm. The enzyme catalyses ATP + H2O + a folded polypeptide = ADP + phosphate + an unfolded polypeptide.. Its function is as follows. Together with its co-chaperonin GroES, plays an essential role in assisting protein folding. The GroEL-GroES system forms a nano-cage that allows encapsulation of the non-native substrate proteins and provides a physical environment optimized to promote and accelerate protein folding. The protein is Chaperonin GroEL of Malacoplasma penetrans (strain HF-2) (Mycoplasma penetrans).